The chain runs to 123 residues: Ribonuclease P protein component (123 aa).

Belongs to the RnpA family. Consists of a catalytic RNA component (M1 or rnpB) and a protein subunit.

The catalysed reaction is Endonucleolytic cleavage of RNA, removing 5'-extranucleotides from tRNA precursor.. In terms of biological role, RNaseP catalyzes the removal of the 5'-leader sequence from pre-tRNA to produce the mature 5'-terminus. It can also cleave other RNA substrates such as 4.5S RNA. The protein component plays an auxiliary but essential role in vivo by binding to the 5'-leader sequence and broadening the substrate specificity of the ribozyme. The sequence is that of Ribonuclease P protein component from Streptococcus pneumoniae (strain JJA).